Here is a 268-residue protein sequence, read N- to C-terminus: Nickel import ATP-binding protein NikE (268 aa).

The ABC transporter domain occupies 4-252 (LNVSDLSHHY…SSDAGRVLQN (249 aa)). 45 to 52 (GRSGCGKS) serves as a coordination point for ATP.

It belongs to the ABC transporter superfamily. Nickel importer (TC 3.A.1.5.3) family. The complex is composed of two ATP-binding proteins (NikD and NikE), two transmembrane proteins (NikB and NikC) and a solute-binding protein (NikA).

The protein localises to the cell inner membrane. The catalysed reaction is Ni(2+)(out) + ATP + H2O = Ni(2+)(in) + ADP + phosphate + H(+). Part of the ABC transporter complex NikABCDE involved in nickel import. Responsible for energy coupling to the transport system. In Escherichia coli O157:H7, this protein is Nickel import ATP-binding protein NikE.